A 59-amino-acid polypeptide reads, in one-letter code: Conotoxin ViVA (59 aa).

Positions 1–19 are cleaved as a signal peptide; that stretch reads MRCVPVFIILLLLIPSASS. Residues 20 to 46 constitute a propeptide that is removed on maturation; that stretch reads AAVQPKTEKDDVPLASVHDSALRILSR. Glutamine 47 bears the Pyrrolidone carboxylic acid mark. 2 disulfides stabilise this stretch: cysteine 48/cysteine 55 and cysteine 49/cysteine 56. Residue isoleucine 58 is modified to Isoleucine amide.

This sequence belongs to the conotoxin T superfamily. In terms of tissue distribution, expressed by the venom duct.

The protein resides in the secreted. The chain is Conotoxin ViVA from Conus virgo (Virgin cone).